A 487-amino-acid chain; its full sequence is UDP-N-acetylmuramate--L-alanine ligase (487 aa).

Residue 126-132 participates in ATP binding; sequence GTHGKTT.

Belongs to the MurCDEF family.

The protein localises to the cytoplasm. It carries out the reaction UDP-N-acetyl-alpha-D-muramate + L-alanine + ATP = UDP-N-acetyl-alpha-D-muramoyl-L-alanine + ADP + phosphate + H(+). Its pathway is cell wall biogenesis; peptidoglycan biosynthesis. In terms of biological role, cell wall formation. In Psychromonas ingrahamii (strain DSM 17664 / CCUG 51855 / 37), this protein is UDP-N-acetylmuramate--L-alanine ligase.